The following is a 349-amino-acid chain: Probable FBD-associated F-box protein At5g38565 (349 aa).

Positions 1–47 (MDIFNGLPDDVLVKILSFVPTKVAVSTSILSKRWEFLWMWLPRLDFG) constitute an F-box domain. An FBD domain is found at 263 to 311 (CWNQPISVPECLLESLQIFNLSHYFGKQQDLDFVVYILKNACHLKTATI).

This chain is Probable FBD-associated F-box protein At5g38565, found in Arabidopsis thaliana (Mouse-ear cress).